The sequence spans 220 residues: Phosphatidylinositol phosphate synthase (220 aa).

2 helical membrane-spanning segments follow: residues 21-46 (LLRA…ALTL) and 52-72 (LFWG…DGAM). A CDP-1,2-diacyl-sn-glycerol is bound at residue 29-32 (DTVT). Mg(2+)-binding residues include aspartate 66 and aspartate 69. Residues glycine 70, arginine 74, and threonine 80 each contribute to the a CDP-1,2-diacyl-sn-glycerol site. Mg(2+)-binding residues include aspartate 87 and aspartate 91. Catalysis depends on aspartate 91, which acts as the Proton acceptor. 4 consecutive transmembrane segments (helical) span residues 93-110 (VADG…AFGW), 116-134 (VVAT…YVKA), 154-171 (LIIV…GVQW), and 177-194 (MWVL…RMHA).

This sequence belongs to the CDP-alcohol phosphatidyltransferase class-I family. In terms of assembly, homodimer. Mg(2+) serves as cofactor.

Its subcellular location is the cell membrane. The catalysed reaction is a CDP-1,2-diacyl-sn-glycerol + 1D-myo-inositol 3-phosphate = a 1,2-diacyl-sn-glycero-3-phospho-(1D-myo-inositol-3-phosphate) + CMP + H(+). It carries out the reaction 1,2-di-(9Z-octadecenoyl)-sn-glycero-3-cytidine-5'-diphosphate + 1D-myo-inositol 3-phosphate = 1,2-di-(9Z-octadecenoyl)-sn-glycero-3-phospho-(1D-myo-inositol-3-phosphate) + CMP + H(+). It functions in the pathway phospholipid metabolism; phosphatidylinositol phosphate biosynthesis. Functionally, catalyzes the conjugation of the 1'-hydroxyl group of D-myo-inositol-3-phosphate (also named L-myo-inositol-1-phosphate) with a lipid tail of cytidine diphosphate diacylglycerol (CDP-DAG), forming phosphatidylinositol phosphate (PIP) and CMP. PIP is a precursor of phosphatidylinositol (PI) which is an essential lipid for mycobacteria required for formation of their cell wall. The chain is Phosphatidylinositol phosphate synthase from Mycobacteroides abscessus (strain ATCC 19977 / DSM 44196 / CCUG 20993 / CIP 104536 / JCM 13569 / NCTC 13031 / TMC 1543 / L948) (Mycobacterium abscessus).